Reading from the N-terminus, the 277-residue chain is Protein CMSS1 (277 aa).

The segment covering M1 to A14 has biased composition (acidic residues). The tract at residues M1 to E91 is disordered. Positions E24–G34 are enriched in basic and acidic residues. The segment covering N35 to E52 has biased composition (basic residues). Basic and acidic residues predominate over residues V53–P66.

Belongs to the CMS1 family.

The protein is Protein CMSS1 (cmss1) of Xenopus laevis (African clawed frog).